The chain runs to 166 residues: Protein adg1 (166 aa).

A signal peptide spans 1-22 (MFLRSIFQTLCAVSFLAGSVFA).

It localises to the endoplasmic reticulum. The polypeptide is Protein adg1 (adg1) (Schizosaccharomyces pombe (strain 972 / ATCC 24843) (Fission yeast)).